The sequence spans 299 residues: Pyridoxal 5'-phosphate synthase subunit PdxS (299 aa).

D24 is a binding site for D-ribose 5-phosphate. The active-site Schiff-base intermediate with D-ribose 5-phosphate is K81. Residue G153 coordinates D-ribose 5-phosphate. D-glyceraldehyde 3-phosphate is bound at residue R165. D-ribose 5-phosphate-binding positions include G219 and 240-241 (GS).

The protein belongs to the PdxS/SNZ family. As to quaternary structure, in the presence of PdxT, forms a dodecamer of heterodimers.

The catalysed reaction is aldehydo-D-ribose 5-phosphate + D-glyceraldehyde 3-phosphate + L-glutamine = pyridoxal 5'-phosphate + L-glutamate + phosphate + 3 H2O + H(+). Its pathway is cofactor biosynthesis; pyridoxal 5'-phosphate biosynthesis. In terms of biological role, catalyzes the formation of pyridoxal 5'-phosphate from ribose 5-phosphate (RBP), glyceraldehyde 3-phosphate (G3P) and ammonia. The ammonia is provided by the PdxT subunit. Can also use ribulose 5-phosphate and dihydroxyacetone phosphate as substrates, resulting from enzyme-catalyzed isomerization of RBP and G3P, respectively. This is Pyridoxal 5'-phosphate synthase subunit PdxS from Methanococcus aeolicus (strain ATCC BAA-1280 / DSM 17508 / OCM 812 / Nankai-3).